A 105-amino-acid polypeptide reads, in one-letter code: Histone H2A-like 1 (105 aa).

The protein belongs to the histone H2A family. The nucleosome is a histone octamer containing two molecules each of H2A, H2B, H3 and H4 assembled in one H3-H4 heterotetramer and two H2A-H2B heterodimers. May be incorporated into a proportion of nucleosomes, replacing one or more H2A molecules. Interacts with H2BC1/TH2B; preferentially dimerizes with H2BC1/TH2B to form nucleosomes. Testis-specific.

The protein localises to the nucleus. The protein resides in the chromosome. Atypical histone H2A which can replace conventional H2A in some nucleosomes and may play a role during spermatogenesis. Nucleosomes wrap and compact DNA into chromatin, limiting DNA accessibility to the cellular machineries which require DNA as a template. Histones thereby play a central role in transcription regulation, DNA repair, DNA replication and chromosomal stability. DNA accessibility is regulated via a complex set of post-translational modifications of histones, also called histone code, and nucleosome remodeling. The chain is Histone H2A-like 1 from Mus musculus (Mouse).